The sequence spans 337 residues: MRVLGIETSCDETGIAIFDDQKGILSHQLYSQVKLHADYGGVVPELASRDHVRKTIPLIQAALREAGLGKDDIDGIAYTAGPGLVGAILVGATIGRSLAMAWNKPAIAVHHMEGHLLAPMLEERAPEFPFVALLVSGGHSMLVRVDGIGSYQLLGESIDDAAGEAFDKTAKLMGLDYPGGPLLSRLAEKGTTGRFTFPRPMTDRPGLDMSFSGLKTFAANTIAANGDDEQTRADIARAFEDAVVDTLAIKCRRALKETGLNRLVVAGGVSANRHLRAQLAELMESLKGEVFYPRTEYCTDNGAMIAYAGMQRLKAGVFEPLAVKAVPRWPLDTLDPI.

The Fe cation site is built by histidine 111 and histidine 115. Residues 134–138, aspartate 167, glycine 180, and asparagine 272 contribute to the substrate site; that span reads LVSGG. Aspartate 300 is a binding site for Fe cation.

The protein belongs to the KAE1 / TsaD family. Requires Fe(2+) as cofactor.

It is found in the cytoplasm. The enzyme catalyses L-threonylcarbamoyladenylate + adenosine(37) in tRNA = N(6)-L-threonylcarbamoyladenosine(37) in tRNA + AMP + H(+). In terms of biological role, required for the formation of a threonylcarbamoyl group on adenosine at position 37 (t(6)A37) in tRNAs that read codons beginning with adenine. Is involved in the transfer of the threonylcarbamoyl moiety of threonylcarbamoyl-AMP (TC-AMP) to the N6 group of A37, together with TsaE and TsaB. TsaD likely plays a direct catalytic role in this reaction. The polypeptide is tRNA N6-adenosine threonylcarbamoyltransferase (Aeromonas hydrophila subsp. hydrophila (strain ATCC 7966 / DSM 30187 / BCRC 13018 / CCUG 14551 / JCM 1027 / KCTC 2358 / NCIMB 9240 / NCTC 8049)).